The sequence spans 453 residues: Enolase (453 aa).

Q163 lines the (2R)-2-phosphoglycerate pocket. Residue E205 is the Proton donor of the active site. Mg(2+)-binding residues include D258, E308, and D335. K360, R389, S390, and K411 together coordinate (2R)-2-phosphoglycerate. K360 serves as the catalytic Proton acceptor.

It belongs to the enolase family. Mg(2+) serves as cofactor.

The protein localises to the cytoplasm. It localises to the secreted. The protein resides in the cell surface. The catalysed reaction is (2R)-2-phosphoglycerate = phosphoenolpyruvate + H2O. Its pathway is carbohydrate degradation; glycolysis; pyruvate from D-glyceraldehyde 3-phosphate: step 4/5. In terms of biological role, catalyzes the reversible conversion of 2-phosphoglycerate (2-PG) into phosphoenolpyruvate (PEP). It is essential for the degradation of carbohydrates via glycolysis. The protein is Enolase of Mesoplasma florum (strain ATCC 33453 / NBRC 100688 / NCTC 11704 / L1) (Acholeplasma florum).